Reading from the N-terminus, the 440-residue chain is Xaa-Pro dipeptidase (440 aa).

Mn(2+) contacts are provided by D244, D255, H335, E380, and E419.

Belongs to the peptidase M24B family. Bacterial-type prolidase subfamily. The cofactor is Mn(2+).

It catalyses the reaction Xaa-L-Pro dipeptide + H2O = an L-alpha-amino acid + L-proline. Splits dipeptides with a prolyl residue in the C-terminal position. The protein is Xaa-Pro dipeptidase of Shewanella denitrificans (strain OS217 / ATCC BAA-1090 / DSM 15013).